The following is a 635-amino-acid chain: Threonine--tRNA ligase (635 aa).

The TGS domain maps to 1–61 (MVSIRLPDGS…DHDASLAIVT (61 aa)). Positions 242–533 (DHRKLGKQLD…LIEHHAGAMP (292 aa)) are catalytic. Cysteine 333, histidine 384, and histidine 510 together coordinate Zn(2+).

It belongs to the class-II aminoacyl-tRNA synthetase family. In terms of assembly, homodimer. The cofactor is Zn(2+).

The protein localises to the cytoplasm. It catalyses the reaction tRNA(Thr) + L-threonine + ATP = L-threonyl-tRNA(Thr) + AMP + diphosphate + H(+). In terms of biological role, catalyzes the attachment of threonine to tRNA(Thr) in a two-step reaction: L-threonine is first activated by ATP to form Thr-AMP and then transferred to the acceptor end of tRNA(Thr). Also edits incorrectly charged L-seryl-tRNA(Thr). In Burkholderia multivorans (strain ATCC 17616 / 249), this protein is Threonine--tRNA ligase.